Consider the following 408-residue polypeptide: MINYFFIFLVPSLGMVAGLSVAATVTVFLLISLLQNIAAWIPNRHCEEQSDVAISLNILRLLRQLFCNFLAMTIKTELLFAGWCLISCLFAIKPINSLINFVQVFTILFLGFVVSNFKPFQNRPKLKKALIFGTLTGILLFFVEYFSYGFLTRIFKANFNLYMLDRGCALLSITAWVVIAILIYDKKYCPALILYILVLYLLSISDSLASFLGFSLGGIVFILARFIKPIFSKLIIFGLITGSLLFPIIAGQINPKGLSDKYLTTHPSAAHRLFIWHFVANKIAEKPLMINGFNSSKYTQVKDSEMIDYKGEKWHPLPLHPHNNILQITLELGLIGLALFLSLVYKYLKQIGNIGNDNFRASSYACFINYYIIGMISYNVWQIWWIASSIWVLILMKLLVKPDIVIDK.

A run of 10 helical transmembrane segments spans residues Phe5–Val25, Met72–Ile92, Pro94–Val114, Leu130–Phe150, Met163–Ile183, Leu192–Leu212, Ile230–Ala250, Ile325–Tyr345, Phe359–Ser377, and Val380–Val400.

Belongs to the O-antigen ligase family.

Its subcellular location is the membrane. The sequence is that of Putative polysaccharide ligase RBE_0399 (rfaL) from Rickettsia bellii (strain RML369-C).